Consider the following 254-residue polypeptide: Flagellar L-ring protein 1 (254 aa).

Positions 1–26 are cleaved as a signal peptide; sequence MSPFSSAFRPRRIAISALLLAIGALA.

The protein belongs to the FlgH family. The basal body constitutes a major portion of the flagellar organelle and consists of four rings (L,P,S, and M) mounted on a central rod.

It localises to the cell outer membrane. The protein localises to the bacterial flagellum basal body. In terms of biological role, assembles around the rod to form the L-ring and probably protects the motor/basal body from shearing forces during rotation. This chain is Flagellar L-ring protein 1 (flgH1), found in Bradyrhizobium diazoefficiens (strain JCM 10833 / BCRC 13528 / IAM 13628 / NBRC 14792 / USDA 110).